The chain runs to 236 residues: MEYKRVLVKFSGEALSGNSGFGIDVKILEYIAGEIKSLVDNQIEVGIVIGGGNIIRGVSAAQGGIIRRTSGDYMGMLATVINAVAMQEALEYLGVDVRVQSALEIKEVCESYIYRRAIRHLEKGRVVVFGAGTGNPFFTTDSAATLRAVEIGADVIIKATKVDGVYDKDPHKFSDAKMLESISYDEALRDHIKVMDDTAIALAKDNKLPILVCNMFREGNLLDLLKYKKGICSIVK.

9–12 (KFSG) contributes to the ATP binding site. The segment at 17–22 (GNSGFG) is involved in allosteric activation by GTP. Gly51 is a UMP binding site. 2 residues coordinate ATP: Gly52 and Arg56. UMP is bound by residues Asp72 and 133 to 140 (TGNPFFTT). Residues Thr160, Tyr166, and Asp169 each contribute to the ATP site.

The protein belongs to the UMP kinase family. Homohexamer.

Its subcellular location is the cytoplasm. It carries out the reaction UMP + ATP = UDP + ADP. Its pathway is pyrimidine metabolism; CTP biosynthesis via de novo pathway; UDP from UMP (UMPK route): step 1/1. With respect to regulation, allosterically activated by GTP. Inhibited by UTP. Its function is as follows. Catalyzes the reversible phosphorylation of UMP to UDP. This is Uridylate kinase from Helicobacter hepaticus (strain ATCC 51449 / 3B1).